The chain runs to 194 residues: tRNA (pseudouridine(54)-N(1))-methyltransferase (194 aa).

L125 contacts S-adenosyl-L-methionine.

It belongs to the methyltransferase superfamily. TrmY family. In terms of assembly, homodimer.

Its subcellular location is the cytoplasm. The catalysed reaction is pseudouridine(54) in tRNA + S-adenosyl-L-methionine = N(1)-methylpseudouridine(54) in tRNA + S-adenosyl-L-homocysteine + H(+). Functionally, specifically catalyzes the N1-methylation of pseudouridine at position 54 (Psi54) in tRNAs. This chain is tRNA (pseudouridine(54)-N(1))-methyltransferase, found in Methanospirillum hungatei JF-1 (strain ATCC 27890 / DSM 864 / NBRC 100397 / JF-1).